A 260-amino-acid polypeptide reads, in one-letter code: Hydroxyethylthiazole kinase 1 (260 aa).

Met39 is a substrate binding site. Positions 115 and 160 each coordinate ATP. Gly187 lines the substrate pocket.

The protein belongs to the Thz kinase family. Requires Mg(2+) as cofactor.

The enzyme catalyses 5-(2-hydroxyethyl)-4-methylthiazole + ATP = 4-methyl-5-(2-phosphooxyethyl)-thiazole + ADP + H(+). Its pathway is cofactor biosynthesis; thiamine diphosphate biosynthesis; 4-methyl-5-(2-phosphoethyl)-thiazole from 5-(2-hydroxyethyl)-4-methylthiazole: step 1/1. Catalyzes the phosphorylation of the hydroxyl group of 4-methyl-5-beta-hydroxyethylthiazole (THZ). The chain is Hydroxyethylthiazole kinase 1 from Streptococcus pneumoniae (strain Taiwan19F-14).